The following is a 346-amino-acid chain: D-alanine--D-alanine ligase A (346 aa).

An ATP-grasp domain is found at 138 to 332; that stretch reads KRLFLAAGVE…FAELCERICR (195 aa). 164–217 provides a ligand contact to ATP; it reads QLGFPLVVKPNSQGSTVGLSIVHSQAELQPAIELAGRYGDEVMLERFVAGREVT. Residues aspartate 286, glutamate 299, and asparagine 301 each contribute to the Mg(2+) site.

Belongs to the D-alanine--D-alanine ligase family. Requires Mg(2+) as cofactor. It depends on Mn(2+) as a cofactor.

It is found in the cytoplasm. It carries out the reaction 2 D-alanine + ATP = D-alanyl-D-alanine + ADP + phosphate + H(+). It participates in cell wall biogenesis; peptidoglycan biosynthesis. Its function is as follows. Cell wall formation. This chain is D-alanine--D-alanine ligase A, found in Pseudomonas aeruginosa (strain ATCC 15692 / DSM 22644 / CIP 104116 / JCM 14847 / LMG 12228 / 1C / PRS 101 / PAO1).